The sequence spans 295 residues: Aspartate carbamoyltransferase catalytic subunit (295 aa).

Residues R54 and T55 each coordinate carbamoyl phosphate. K82 contributes to the L-aspartate binding site. Carbamoyl phosphate contacts are provided by R104, H132, and Q135. L-aspartate-binding residues include R165 and R218. G257 and P258 together coordinate carbamoyl phosphate.

This sequence belongs to the aspartate/ornithine carbamoyltransferase superfamily. ATCase family. Heterododecamer (2C3:3R2) of six catalytic PyrB chains organized as two trimers (C3), and six regulatory PyrI chains organized as three dimers (R2).

The catalysed reaction is carbamoyl phosphate + L-aspartate = N-carbamoyl-L-aspartate + phosphate + H(+). It participates in pyrimidine metabolism; UMP biosynthesis via de novo pathway; (S)-dihydroorotate from bicarbonate: step 2/3. Catalyzes the condensation of carbamoyl phosphate and aspartate to form carbamoyl aspartate and inorganic phosphate, the committed step in the de novo pyrimidine nucleotide biosynthesis pathway. This is Aspartate carbamoyltransferase catalytic subunit from Wolbachia pipientis wMel.